We begin with the raw amino-acid sequence, 340 residues long: Solute carrier family 35 member G3 (340 aa).

The segment at 11 to 33 (PDFTQPSPPSTPASLPSKHHHRC) is disordered. The next 9 helical transmembrane spans lie at 39–59 (TKGLFVALLGGGLSAGFVGPF), 69–89 (LPSLELLIFRCLFHLPIALLL), 107–127 (FLHAILNVLSIGCAYSAVQVV), 160–180 (AWCGLFGSTLGLIIIVGPGLG), 189–209 (LYTALGYVLAFLGGLALSLGL), 223–243 (TVAFLFGLVGLMVSVPGLFVL), 257–277 (CVVAVGLLALVSFVCVSYAVT), 283–303 (LVCAVLHSEVVVALMLQYYVL), and 307–327 (VAPSDIMGAGVVLGSIAIITA). One can recognise an EamA 1 domain in the interval 51–176 (LSAGFVGPFS…STLGLIIIVG (126 aa)). Residues 274 to 327 (YAVTKAHPALVCAVLHSEVVVALMLQYYVLYETVAPSDIMGAGVVLGSIAIITA) enclose the EamA 2 domain.

The protein belongs to the SLC35G solute transporter family.

It is found in the membrane. This Mus musculus (Mouse) protein is Solute carrier family 35 member G3 (Slc35g3).